The primary structure comprises 180 residues: Large ribosomal subunit protein uL5 (180 aa).

It belongs to the universal ribosomal protein uL5 family. In terms of assembly, part of the 50S ribosomal subunit; part of the 5S rRNA/L5/L18/L25 subcomplex. Contacts the 5S rRNA and the P site tRNA. Forms a bridge to the 30S subunit in the 70S ribosome.

This is one of the proteins that bind and probably mediate the attachment of the 5S RNA into the large ribosomal subunit, where it forms part of the central protuberance. In the 70S ribosome it contacts protein S13 of the 30S subunit (bridge B1b), connecting the 2 subunits; this bridge is implicated in subunit movement. Contacts the P site tRNA; the 5S rRNA and some of its associated proteins might help stabilize positioning of ribosome-bound tRNAs. This chain is Large ribosomal subunit protein uL5, found in Roseiflexus castenholzii (strain DSM 13941 / HLO8).